Consider the following 525-residue polypeptide: MTENIHKHRILILDFGSQYTQLVARRVRELGVYCELWAWDVTEAQIRDFNPSGIILSGGPESTTEENSPRALQYVFEAGVPVFGVCYGMQTMAMQLGGHVEGSNEREFGYAQVEVLTDSALVRGIEDSLTADGKPLLDVWMSHGDKVTAIPSDFVTVASTESCPFAIMANEEKRFYGVQFHPEVTHTRQGMRMLERFVRDICQCEALWTPAKIIDDAVARIREQVGDDKVILGLSGGVDSSVTAMLLHRAIGKNLTCVFVDNGLLRLNEAEQVMDMFGDHFGLNIVHVPAEERFLSALAGENDPEAKRKIIGRVFVEVFDEEALKLEDVKWLAQGTIYPDVIESAASATGKAHVIKSHHNVGGLPKEMKMGLVEPLKELFKDEVRKIGLELGLPYDMLYRHPFPGPGLGVRVLGEVKKEYCDLLRRADAIFIEELRKADLYDKVSQAFTVFLPVRSVGVMGDGRKYDWVVSLRAVETIDFMTAHWAHLPYDFLGRVSNRIINEVNGISRVVYDISGKPPATIEWE.

One can recognise a Glutamine amidotransferase type-1 domain in the interval 9-207; it reads RILILDFGSQ…VRDICQCEAL (199 aa). The Nucleophile role is filled by Cys-86. Residues His-181 and Glu-183 contribute to the active site. The region spanning 208 to 400 is the GMPS ATP-PPase domain; that stretch reads WTPAKIIDDA…LGLPYDMLYR (193 aa). ATP is bound at residue 235–241; sequence SGGVDSS.

Homodimer.

It carries out the reaction XMP + L-glutamine + ATP + H2O = GMP + L-glutamate + AMP + diphosphate + 2 H(+). Its pathway is purine metabolism; GMP biosynthesis; GMP from XMP (L-Gln route): step 1/1. Its function is as follows. Catalyzes the synthesis of GMP from XMP. This is GMP synthase [glutamine-hydrolyzing] from Salmonella typhimurium (strain LT2 / SGSC1412 / ATCC 700720).